The sequence spans 164 residues: Phosphopantetheine adenylyltransferase (164 aa).

Serine 9 lines the substrate pocket. Residues 9–10 (SF) and histidine 17 contribute to the ATP site. 3 residues coordinate substrate: lysine 41, alanine 78, and arginine 92. ATP-binding positions include 93–95 (GLR), glutamate 103, and 128–134 (SRPITAT).

This sequence belongs to the bacterial CoaD family. Homohexamer. Mg(2+) serves as cofactor.

It localises to the cytoplasm. The enzyme catalyses (R)-4'-phosphopantetheine + ATP + H(+) = 3'-dephospho-CoA + diphosphate. The protein operates within cofactor biosynthesis; coenzyme A biosynthesis; CoA from (R)-pantothenate: step 4/5. Functionally, reversibly transfers an adenylyl group from ATP to 4'-phosphopantetheine, yielding dephospho-CoA (dPCoA) and pyrophosphate. This chain is Phosphopantetheine adenylyltransferase, found in Allorhizobium ampelinum (strain ATCC BAA-846 / DSM 112012 / S4) (Agrobacterium vitis (strain S4)).